The primary structure comprises 199 residues: NAD(P)H dehydrogenase (quinone) (199 aa).

The Flavodoxin-like domain maps to 4 to 190 (ILVLYYSSWG…EGARFQGKRL (187 aa)). Residues 10–15 (SSWGHM) and 78–80 (TRY) each bind FMN. Trp12 is a binding site for NAD(+). Trp98 is a substrate binding site. FMN contacts are provided by residues 113-119 (STATQHG) and His134. A disordered region spans residues 155–175 (VRGGAPYGMTTTSDTDGSRMP).

Belongs to the WrbA family. FMN is required as a cofactor.

The enzyme catalyses a quinone + NADH + H(+) = a quinol + NAD(+). It carries out the reaction a quinone + NADPH + H(+) = a quinol + NADP(+). This chain is NAD(P)H dehydrogenase (quinone), found in Chelativorans sp. (strain BNC1).